The chain runs to 3856 residues: Serine/threonine-protein kinase ATM (3856 aa).

Positions 108–162 (VGNLVWVMTKYKKWWPGEVVDFKADAKESFMVRSIGQSHLVSWFASSKLKPFKES) constitute a PWWP domain. The segment at 648–681 (GIPDLNGTNTEPTLVLPQVEPTQRRRRRKKEESP) is disordered. The region spanning 2727 to 3393 (VVAGSAVVCG…ILQLLALANG (667 aa)) is the FAT domain. A Bipartite nuclear localization signal motif is present at residues 3233-3249 (RKHKTKELEVFIKRFKS). Residues 3499–3811 (LSDSVTVMNG…GNKDATRALM (313 aa)) enclose the PI3K/PI4K catalytic domain. Residues 3505–3511 (VMNGINA) are G-loop. Positions 3678–3686 (GLGDRHAMN) are catalytic loop. Positions 3698 to 3722 (HIDLGVAFEQGLMLKTPERVPFRLT) are activation loop. The region spanning 3824-3856 (EMRSIHGQAQQLIQDAIDTDRLSHMFPGWGAWM) is the FATC domain.

It belongs to the PI3/PI4-kinase family. In terms of assembly, interacts with RUG3. In terms of tissue distribution, ubiquitously expressed at low levels with slightly higher levels in flower buds.

It localises to the nucleus. The catalysed reaction is L-seryl-[protein] + ATP = O-phospho-L-seryl-[protein] + ADP + H(+). It carries out the reaction L-threonyl-[protein] + ATP = O-phospho-L-threonyl-[protein] + ADP + H(+). Functionally, serine/threonine protein kinase which activates checkpoint signaling upon genotoxic stresses such as ionizing radiation (IR) or DNA replication stalling. Plays a central role in the perception and response to both stress-induced damage in somatic cells and developmentally programmed DNA damage during meiosis. Recognizes the substrate consensus sequence [ST]-Q. Phosphorylates histone variant H2AX to form H2AXS139ph at double strand breaks (DSBs), thereby regulating DNA damage response mechanism. Involved in transcriptional regulation of RAD51, PARP1, GR1, and LIG4 in response to DNA double strand breaks. Plays a dual role by activating the DNA damage response at dysfunctional telomeres and yet preventing this activation at functional telomeres. Not required for telomere length homeostasis. Regulates DNA damage response (DDR) synergistically with RUG3. Together with RUG3, involved in the splicing of the ND2/NAD2 mRNA. The polypeptide is Serine/threonine-protein kinase ATM (Arabidopsis thaliana (Mouse-ear cress)).